The chain runs to 401 residues: MNKIISVWKKMNLIRKIGIGVVLGVLLGLIAPKITVIALFGSLFVGALKAIAPLLVLTLVAHALSQAPAGQKSNMRTVICLYLFGTFAAAFIAVGASYLFPIKLVLSTTTTTDITPPQGIAEVFQDLLLKVVDNPINALATANYIGVLTWAAVFGLAFRHASKTTKDLLQSTAEVISKVVGWIIGLAPFGIMGLVFDTIANNGLTALKDYGLLLLLLVGSMIFVALVVNPLIAFLVMKKNPYPLVFECLRVSGVTAFFTRSSAANIPVNMQLCKRLGVDPDTYSVSIPLGATINMAGAAITINILTMAAVHTLGISVDFSSALLLSVVASLSAAGASGVAGGSLLLIPVACSLFGIPNELAMQVVGVGFVVGVIQDSCEAALNSSTDVLFTVVAERSAWKK.

A run of 8 helical transmembrane segments spans residues 17–37 (IGIGVVLGVLLGLIAPKITVI), 40–60 (FGSLFVGALKAIAPLLVLTLV), 78–98 (VICLYLFGTFAAAFIAVGASY), 138–158 (ALATANYIGVLTWAAVFGLAF), 179–199 (VVGWIIGLAPFGIMGLVFDTI), 212–232 (LLLLLLVGSMIFVALVVNPLI), 295–315 (MAGAAITINILTMAAVHTLGI), and 336–356 (ASGVAGGSLLLIPVACSLFGI).

It belongs to the dicarboxylate/amino acid:cation symporter (DAACS) (TC 2.A.23) family.

It localises to the cell membrane. It catalyses the reaction L-serine(in) + Na(+)(in) = L-serine(out) + Na(+)(out). It carries out the reaction L-threonine(in) + Na(+)(in) = L-threonine(out) + Na(+)(out). Its function is as follows. Involved in the import of serine and threonine into the cell, with the concomitant import of sodium (symport system). This chain is Serine/threonine transporter SstT, found in Streptococcus suis (strain 98HAH33).